A 197-amino-acid polypeptide reads, in one-letter code: Surfactant protein C (197 aa).

The propeptide occupies M1–R23. 2 S-palmitoyl cysteine lipidation sites follow: C28 and C29. Positions H59–I197 are excised as a propeptide. The region spanning F94–I197 is the BRICHOS domain. Cystine bridges form between C120-C148 and C121-C189.

The protein localises to the secreted. The protein resides in the extracellular space. It is found in the surface film. Pulmonary surfactant associated proteins promote alveolar stability by lowering the surface tension at the air-liquid interface in the peripheral air spaces. The polypeptide is Surfactant protein C (Homo sapiens (Human)).